Reading from the N-terminus, the 143-residue chain is UPF0306 protein plu4501 (143 aa).

It belongs to the UPF0306 family.

This is UPF0306 protein plu4501 from Photorhabdus laumondii subsp. laumondii (strain DSM 15139 / CIP 105565 / TT01) (Photorhabdus luminescens subsp. laumondii).